The chain runs to 395 residues: Tyrosine--tRNA ligase (395 aa).

Positions 42–51 (PTAPDIHLGH) match the 'HIGH' region motif. Residues 226-230 (KMSKS) carry the 'KMSKS' region motif. An ATP-binding site is contributed by K229. Residues 334-394 (IGLATLLKEA…GKRKFARVTV (61 aa)) enclose the S4 RNA-binding domain.

Belongs to the class-I aminoacyl-tRNA synthetase family. TyrS type 2 subfamily. As to quaternary structure, homodimer.

It localises to the cytoplasm. It catalyses the reaction tRNA(Tyr) + L-tyrosine + ATP = L-tyrosyl-tRNA(Tyr) + AMP + diphosphate + H(+). In terms of biological role, catalyzes the attachment of tyrosine to tRNA(Tyr) in a two-step reaction: tyrosine is first activated by ATP to form Tyr-AMP and then transferred to the acceptor end of tRNA(Tyr). This is Tyrosine--tRNA ligase from Haemophilus influenzae (strain 86-028NP).